A 270-amino-acid chain; its full sequence is MYFVLSPAKSLNEKDAVSVKVGNYYSQPELIEDAQALMKILKSKEPIDLQALMSISDDLAQLNAQRNQDWAWSEDKPFTEDNAKPAGYLFDGDVYTGLDMYSADKQTVVYLNEHLGILSGLYGVLKPLDMIQPYRLEMGTKLKNEQGDNLYEFWGEHITDVINQRMKDTSEQGEDNILINLASNEYFKAVKKKSLDAAIITPRFEDEKNGKYKVISFYAKKARGLMVRYAADNKITKAEDLKQFDLAGYYYVDELSDDKTWVFRRDEASQ.

The protein belongs to the UPF0246 family.

This Psychrobacter sp. (strain PRwf-1) protein is UPF0246 protein PsycPRwf_0637.